A 235-amino-acid chain; its full sequence is MAKRSKAYEAAVAKIEEGKFYAPADAVTLAQDTNPSKFDATIEVAFRLGVDPRKADQMVRGTVILPHGTGKTARVLVFATGDRAEAAIAAGADFVGSDDLIEKIAGGWTDFDAAVATPDLMGKVGRLGKVLGPRNLMPNPKTGTVTVDVAKAVNEIKGGKIDFRVDKHSNLHFIIGKVSFGAQQLVENYAAALDEVLRLKPSTSKGRYLQKATVTTTFGPGISVDPNVTKVLADA.

This sequence belongs to the universal ribosomal protein uL1 family. Part of the 50S ribosomal subunit.

Its function is as follows. Binds directly to 23S rRNA. The L1 stalk is quite mobile in the ribosome, and is involved in E site tRNA release. Functionally, protein L1 is also a translational repressor protein, it controls the translation of the L11 operon by binding to its mRNA. This Renibacterium salmoninarum (strain ATCC 33209 / DSM 20767 / JCM 11484 / NBRC 15589 / NCIMB 2235) protein is Large ribosomal subunit protein uL1.